The following is a 427-amino-acid chain: Tyrosine--tRNA ligase (427 aa).

L-tyrosine is bound at residue tyrosine 39. The 'HIGH' region motif lies at 44–53 (PTSDSLHIGH). Tyrosine 178 and glutamine 182 together coordinate L-tyrosine. Residues 238 to 242 (KFGKT) carry the 'KMSKS' region motif. ATP is bound at residue lysine 241. Residues 360–417 (ITLQQALVESKLVVSRAQARELISSNSITVNSKKQLKTEYIFCATDRLYNRFTLLRRG) enclose the S4 RNA-binding domain.

The protein belongs to the class-I aminoacyl-tRNA synthetase family. TyrS type 1 subfamily. Homodimer.

The protein localises to the cytoplasm. It carries out the reaction tRNA(Tyr) + L-tyrosine + ATP = L-tyrosyl-tRNA(Tyr) + AMP + diphosphate + H(+). Its function is as follows. Catalyzes the attachment of tyrosine to tRNA(Tyr) in a two-step reaction: tyrosine is first activated by ATP to form Tyr-AMP and then transferred to the acceptor end of tRNA(Tyr). In Blochmanniella pennsylvanica (strain BPEN), this protein is Tyrosine--tRNA ligase.